Here is a 421-residue protein sequence, read N- to C-terminus: ATP-dependent RNA helicase eIF4A (421 aa).

Residues 1 to 26 (MSNDKGLEEIPEDQSTTPHKPTSNVG) form a disordered region. Residues 13–26 (DQSTTPHKPTSNVG) show a composition bias toward polar residues. Positions 48–76 (DSFDAMELKPELLRGVYAYGFERPSAIQQ) match the Q motif motif. Residues 79 to 249 (IKPIIKGSDV…TKFMRDPVRI (171 aa)) enclose the Helicase ATP-binding domain. Position 92-99 (92-99 (AQSGTGKT)) interacts with ATP. The DEAD box signature appears at 197-200 (DEAD). The 162-residue stretch at 260–421 (GIKQFYIAVE…EMPMNVADLI (162 aa)) folds into the Helicase C-terminal domain.

It belongs to the DEAD box helicase family. eIF4A subfamily. Component of the eIF4F complex, which composition varies with external and internal environmental conditions. It is composed of at least eIF4A, eIF4E and eIF4G.

It localises to the cytoplasm. The enzyme catalyses ATP + H2O = ADP + phosphate + H(+). ATP-dependent RNA helicase which is a subunit of the eIF4F complex involved in cap recognition and is required for mRNA binding to ribosome. In the current model of translation initiation, eIF4A unwinds RNA secondary structures in the 5'-UTR of mRNAs which is necessary to allow efficient binding of the small ribosomal subunit, and subsequent scanning for the initiator codon. The polypeptide is ATP-dependent RNA helicase eIF4A (tif1) (Aspergillus oryzae (strain ATCC 42149 / RIB 40) (Yellow koji mold)).